Reading from the N-terminus, the 637-residue chain is BUD13 homolog (637 aa).

The interval 18–53 (SGTDAGLEGGPEAGRKRRKKRPKPGGAGGKGMRIVD) is disordered. K65 is covalently cross-linked (Glycyl lysine isopeptide (Lys-Gly) (interchain with G-Cter in SUMO2)). The tract at residues 104 to 470 (LLGGHGEDGH…KKQDQDTTDL (367 aa)) is disordered. Residues 108-119 (HGEDGHFHHDDQ) are compositionally biased toward basic and acidic residues. T131 carries the post-translational modification Phosphothreonine. At S135 the chain carries Phosphoserine. Residue T144 is modified to Phosphothreonine. The residue at position 148 (S148) is a Phosphoserine. T157 is subject to Phosphothreonine. S161 bears the Phosphoserine mark. The residue at position 170 (T170) is a Phosphothreonine. The residue at position 174 (S174) is a Phosphoserine. At T183 the chain carries Phosphothreonine. Residue S187 is modified to Phosphoserine. 2 positions are modified to phosphothreonine: T196 and T209. S213 carries the phosphoserine modification. Residue T222 is modified to Phosphothreonine. Phosphoserine is present on residues S226, S238, S259, S264, S272, S284, S285, and S297. Positions 260–275 (LGTSSPRQTHNHSPTA) are enriched in polar residues. Over residues 295 to 315 (HESPDLELHKAKSSKAAERAP) the composition is skewed to basic and acidic residues. Positions 318–335 (AASQSGLGPSHPSLSTNS) are enriched in polar residues. Residues S341 and S344 each carry the phosphoserine modification. The span at 353–362 (AHFEAKKQLD) shows a compositional bias: basic and acidic residues. Phosphoserine occurs at positions 371, 373, 376, 410, and 426. A compositionally biased stretch (basic residues) spans 430 to 439 (RSPRPGKKTA). Positions 453–465 (VQREHQELKKQDQ) are enriched in basic and acidic residues. The stretch at 490–538 (NLKLERLEQRRKAEKDSERDELYAQWGKGLAQSRQQQQNVEDAMKEMQK) forms a coiled coil. A Phosphotyrosine modification is found at Y512. The interval 553-595 (LREQEREGDPMANFIKKNKAKENKNKKVKPRYSGPAPPPNRFN) is disordered. The residue at position 585 (S585) is a Phosphoserine.

It belongs to the CWC26 family. Part of the activated spliceosome B/catalytic step 1 spliceosome, one of the forms of the spliceosome which has a well-formed active site but still cannot catalyze the branching reaction and is composed of at least 52 proteins, the U2, U5 and U6 snRNAs and the pre-mRNA. Component of the minor spliceosome, which splices U12-type introns.

The protein localises to the nucleus. In terms of biological role, involved in pre-mRNA splicing as component of the activated spliceosome. As a component of the minor spliceosome, involved in the splicing of U12-type introns in pre-mRNAs. This Mus musculus (Mouse) protein is BUD13 homolog (Bud13).